The sequence spans 113 residues: Protein Wnt-10 (113 aa).

A lipid anchor (O-palmitoleoyl serine; by PORCN) is attached at S1. Residues C79 and C94 are joined by a disulfide bond.

This sequence belongs to the Wnt family. Post-translationally, palmitoleoylation is required for efficient binding to frizzled receptors. Depalmitoleoylation leads to Wnt signaling pathway inhibition.

It is found in the secreted. It localises to the extracellular space. Its subcellular location is the extracellular matrix. Ligand for members of the frizzled family of seven transmembrane receptors. Probable developmental protein. May be a signaling molecule which affects the development of discrete regions of tissues. Is likely to signal over only few cell diameters. The protein is Protein Wnt-10 (WNT-10) of Eptatretus stoutii (Pacific hagfish).